Reading from the N-terminus, the 239-residue chain is Myogenic factor 6 (239 aa).

Residues 27 to 64 form a disordered region; that stretch reads QHLDMPGVSPLYDGNHSPLSPGPDNVPSETGGESSGDE. Positions 96 to 147 constitute a bHLH domain; the sequence is DRRKAATLRERRRLKKINEAFDALKRKSVANPNQRLPKVEILRSAISYIERL. A disordered region spans residues 155 to 184; sequence DEQERGQSGASDTRNDKEQNRPSGGDYCWK.

As to quaternary structure, efficient DNA binding requires dimerization with another bHLH protein.

Its subcellular location is the nucleus. Functionally, involved in muscle differentiation (myogenic factor). Induces fibroblasts to differentiate into myoblasts. Probable sequence specific DNA-binding protein. In Tetraodon nigroviridis (Spotted green pufferfish), this protein is Myogenic factor 6 (myf6).